Here is a 276-residue protein sequence, read N- to C-terminus: Microtubule-associated protein RP/EB family member 1A (276 aa).

Positions 13 to 115 (FVGRNEILTW…FLQWLKRFCD (103 aa)) constitute a Calponin-homology (CH) domain. The disordered stretch occupies residues 124–172 (ENYNPVERRSRNGKERSVKGSNKIPKSLQTNNNHPPPNSSSVGLSKASG). Residues 129-141 (VERRSRNGKERSV) are compositionally biased toward basic and acidic residues. The segment covering 162-172 (SSSVGLSKASG) has biased composition (low complexity). The EB1 C-terminal domain maps to 173 to 243 (PKSAKAAEVQ…LYATDANESA (71 aa)). Residues 252–276 (NQSLGVEDDEAEGNGEQLEEEKTQA) form a disordered region. Residues 257–270 (VEDDEAEGNGEQLE) are compositionally biased toward acidic residues.

It belongs to the MAPRE family. As to quaternary structure, homodimer and heterodimer with EB1B. Interacts with tobamovirus movement protein. In terms of tissue distribution, highly expressed in guard cells of leaf stomata, pollen grains and pollen tubes. Expressed in young roots.

Its subcellular location is the cytoplasm. The protein resides in the cytoskeleton. It localises to the spindle pole. The protein localises to the phragmoplast. Binds to the plus end of microtubules and regulates the dynamics of the microtubule cytoskeleton. May be involved in anchoring microtubules to their nucleation sites and/or functioning as a reservoir for distribution to the growing end. In plants, microtubule minus ends are not necessarily severed from the nucleation site and transported to the plus end of a microtubule as part of the recycling process. May play a role in endomembrane organization during polarized growth of plant cells. Interacts with the tobamovirus movement protein (MP) and may play a role in the association of MP with the microtubule system during infection. This Arabidopsis thaliana (Mouse-ear cress) protein is Microtubule-associated protein RP/EB family member 1A (EB1A).